Reading from the N-terminus, the 774-residue chain is Polyribonucleotide nucleotidyltransferase (774 aa).

The Mg(2+) site is built by Asp485 and Asp491. The region spanning 552–611 (PRIETMSVPKDKIRDIIGTGGKIIREIVATTGAKVDIDDDGTVKISSSDTAQIEAARNWI) is the KH domain. One can recognise an S1 motif domain in the interval 621–689 (GKIYTGKVVN…NRGKVRLSMR (69 aa)). Residues 689–774 (RVVDQETGEE…APAFLTRDDD (86 aa)) form a disordered region. Over residues 700–755 (PDTRPPREERPRGDRGDRGDRGPRRDGDRRREGGDRGPRRDRGDRGDRPRRERSEG) the composition is skewed to basic and acidic residues.

Belongs to the polyribonucleotide nucleotidyltransferase family. Requires Mg(2+) as cofactor.

It is found in the cytoplasm. The enzyme catalyses RNA(n+1) + phosphate = RNA(n) + a ribonucleoside 5'-diphosphate. In terms of biological role, involved in mRNA degradation. Catalyzes the phosphorolysis of single-stranded polyribonucleotides processively in the 3'- to 5'-direction. This Rhizorhabdus wittichii (strain DSM 6014 / CCUG 31198 / JCM 15750 / NBRC 105917 / EY 4224 / RW1) (Sphingomonas wittichii) protein is Polyribonucleotide nucleotidyltransferase.